Reading from the N-terminus, the 230-residue chain is uncharacterized protein (230 aa).

Residues glutamate 74, glutamate 76, and aspartate 105 each coordinate a divalent metal cation.

Belongs to the FAH family.

This is an uncharacterized protein from Pyrococcus horikoshii (strain ATCC 700860 / DSM 12428 / JCM 9974 / NBRC 100139 / OT-3).